Here is a 520-residue protein sequence, read N- to C-terminus: Anthranilate synthase component 1 (520 aa).

Residues Ser40, Lys50, and Pro291–Met293 each bind L-tryptophan. Gly328–Thr329 serves as a coordination point for chorismate. Glu361 provides a ligand contact to Mg(2+). Chorismate-binding positions include Tyr449, Arg469, Gly483 to Gly485, and Gly485. Glu498 is a binding site for Mg(2+).

The protein belongs to the anthranilate synthase component I family. In terms of assembly, homodimer. In fact, exists in a monomer-dimer equilibrium in solution, shifted spontaneously in favor of the dimer; the monomer has a reduced activity compared with the dimer. Heterotetramer consisting of two non-identical subunits: a beta subunit (TrpG) and a large alpha subunit (TrpE) (Potential). The cofactor is Mg(2+).

It carries out the reaction chorismate + L-glutamine = anthranilate + pyruvate + L-glutamate + H(+). It functions in the pathway amino-acid biosynthesis; L-tryptophan biosynthesis; L-tryptophan from chorismate: step 1/5. Cooperatively feedback inhibited by tryptophan. Functionally, part of a heterotetrameric complex that catalyzes the two-step biosynthesis of anthranilate, an intermediate in the biosynthesis of L-tryptophan. In the first step, the glutamine-binding beta subunit (TrpG) of anthranilate synthase (AS) provides the glutamine amidotransferase activity which generates ammonia as a substrate that, along with chorismate, is used in the second step, catalyzed by the large alpha subunit of AS (TrpE) to produce anthranilate. In the absence of TrpG, TrpE can synthesize anthranilate directly from chorismate and high concentrations of ammonia. In Salmonella typhimurium (strain LT2 / SGSC1412 / ATCC 700720), this protein is Anthranilate synthase component 1 (trpE).